We begin with the raw amino-acid sequence, 190 residues long: NADH dehydrogenase [ubiquinone] iron-sulfur protein 3 (190 aa).

It belongs to the complex I 30 kDa subunit family. In terms of assembly, complex I is composed of about 45 different subunits. This is a component of the iron-sulfur (IP) fragment of the enzyme.

The protein localises to the mitochondrion inner membrane. The enzyme catalyses a ubiquinone + NADH + 5 H(+)(in) = a ubiquinol + NAD(+) + 4 H(+)(out). Its function is as follows. Core subunit of the mitochondrial membrane respiratory chain NADH dehydrogenase (Complex I) that is believed to belong to the minimal assembly required for catalysis. Complex I functions in the transfer of electrons from NADH to the respiratory chain. The immediate electron acceptor for the enzyme is believed to be ubiquinone. The protein is NADH dehydrogenase [ubiquinone] iron-sulfur protein 3 (NAD9) of Solanum tuberosum (Potato).